A 212-amino-acid chain; its full sequence is Fibroblast growth factor 8b (212 aa).

Positions 1–27 (MRLKSSRLGYLFLQFMTLCFYTQMTMQ) are cleaved as a signal peptide. N-linked (GlcNAc...) asparagine glycosylation occurs at Asn-139.

This sequence belongs to the heparin-binding growth factors family.

The protein resides in the secreted. Its function is as follows. May act as signaling molecule during development of the midbrain-hindbrain boundary (MHB) organizer, and be involved in patterning of the nervous system. The sequence is that of Fibroblast growth factor 8b (fgf8b) from Danio rerio (Zebrafish).